Here is a 1158-residue protein sequence, read N- to C-terminus: Formin-C (1158 aa).

Disordered regions lie at residues 8–29 (INGN…PSVS), 417–523 (PNTS…LSCL), and 990–1052 (INNN…NNSQ). A GBD/FH3 domain is found at 20-388 (QQPQQNPSVS…EYSQRKLEMI (369 aa)). Over residues 417 to 437 (PNTSDLFDSSTLEDTYDGNND) the composition is skewed to polar residues. Low complexity predominate over residues 438 to 481 (TNSCTSISTSSTPIHISQPTTLIVPSTTPNHPPQQSQQTPPLQL). The stretch at 479-515 (LQLQKEKEKEKEKEKEKEKEKEKEQQQQQQQSNKQST) forms a coiled coil. A compositionally biased stretch (basic and acidic residues) spans 482-503 (QKEKEKEKEKEKEKEKEKEKEQ). Residues 601 to 998 (TKSPITPSKR…IINNNNNNNN (398 aa)) enclose the FH2 domain. The DAD domain maps to 1134–1158 (SDDPMAVIIEALKTGSPNDMVKRAF).

The protein belongs to the formin homology family. Diaphanous subfamily. In terms of assembly, interacts (via GBD/FH3 domain) with activated Rho-GTPases.

It localises to the cytoplasm. The protein localises to the cytosol. The protein resides in the cytoskeleton. Formins play an important role in the nucleation of actin and the formation of linear actin filaments. This chain is Formin-C (forC), found in Dictyostelium discoideum (Social amoeba).